A 353-amino-acid polypeptide reads, in one-letter code: Nicotinate-nucleotide--dimethylbenzimidazole phosphoribosyltransferase (353 aa).

Glu319 (proton acceptor) is an active-site residue.

The protein belongs to the CobT family.

The enzyme catalyses 5,6-dimethylbenzimidazole + nicotinate beta-D-ribonucleotide = alpha-ribazole 5'-phosphate + nicotinate + H(+). It functions in the pathway nucleoside biosynthesis; alpha-ribazole biosynthesis; alpha-ribazole from 5,6-dimethylbenzimidazole: step 1/2. Catalyzes the synthesis of alpha-ribazole-5'-phosphate from nicotinate mononucleotide (NAMN) and 5,6-dimethylbenzimidazole (DMB). The protein is Nicotinate-nucleotide--dimethylbenzimidazole phosphoribosyltransferase of Syntrophobacter fumaroxidans (strain DSM 10017 / MPOB).